Reading from the N-terminus, the 1240-residue chain is RNA-directed RNA polymerase VP2 (1240 aa).

In terms of domain architecture, RdRp catalytic spans leucine 516–isoleucine 764.

The protein belongs to the reoviridae RNA-directed RNA polymerase family.

It localises to the virion. The enzyme catalyses RNA(n) + a ribonucleoside 5'-triphosphate = RNA(n+1) + diphosphate. Functionally, RNA-directed RNA polymerase that is involved in transcription and genome replication. Following infection, it catalyzes the synthesis of fully conservative plus strands. After core assembly, which consists in recruitment of one capped plus-strand for each genomic segments and polymerase complexes, the polymerase switches mode and catalyzes the synthesis of complementary minus-strands. This chain is RNA-directed RNA polymerase VP2 (S2), found in Oncorhynchus keta (Chum salmon).